The sequence spans 85 residues: uncharacterized protein (85 aa).

This sequence to A.fulgidus AF_0255 and AF_1363.

This is an uncharacterized protein from Archaeoglobus fulgidus (strain ATCC 49558 / DSM 4304 / JCM 9628 / NBRC 100126 / VC-16).